Reading from the N-terminus, the 156-residue chain is SsrA-binding protein (156 aa).

Positions 135 to 150 (KRDTIKDREWQRDRSR) are enriched in basic and acidic residues. A disordered region spans residues 135 to 156 (KRDTIKDREWQRDRSRIMKKNT).

It belongs to the SmpB family.

Its subcellular location is the cytoplasm. Required for rescue of stalled ribosomes mediated by trans-translation. Binds to transfer-messenger RNA (tmRNA), required for stable association of tmRNA with ribosomes. tmRNA and SmpB together mimic tRNA shape, replacing the anticodon stem-loop with SmpB. tmRNA is encoded by the ssrA gene; the 2 termini fold to resemble tRNA(Ala) and it encodes a 'tag peptide', a short internal open reading frame. During trans-translation Ala-aminoacylated tmRNA acts like a tRNA, entering the A-site of stalled ribosomes, displacing the stalled mRNA. The ribosome then switches to translate the ORF on the tmRNA; the nascent peptide is terminated with the 'tag peptide' encoded by the tmRNA and targeted for degradation. The ribosome is freed to recommence translation, which seems to be the essential function of trans-translation. This is SsrA-binding protein from Legionella pneumophila (strain Corby).